Reading from the N-terminus, the 321-residue chain is Sideroflexin-3 (321 aa).

Position 1 is an N-acetylmethionine (methionine 1). The next 4 membrane-spanning stretches (helical) occupy residues 146–164 (LGTA…ALGL), 174–194 (LVGR…NIPL), 226–246 (FQVV…PPLI), and 266–286 (LQVG…CALF).

It belongs to the sideroflexin family.

The protein resides in the mitochondrion membrane. It carries out the reaction L-serine(in) = L-serine(out). Mitochondrial serine transporter that mediates transport of serine into mitochondria, an important step of the one-carbon metabolism pathway. Mitochondrial serine is converted to glycine and formate, which then exits to the cytosol where it is used to generate the charged folates that serve as one-carbon donors. In Homo sapiens (Human), this protein is Sideroflexin-3.